The primary structure comprises 452 residues: tRNA modification GTPase MnmE (452 aa).

3 residues coordinate (6S)-5-formyl-5,6,7,8-tetrahydrofolate: Arg21, Glu78, and Lys118. The TrmE-type G domain maps to 214–375 (GMKVVIAGRP…LREHLKQSMG (162 aa)). A K(+)-binding site is contributed by Asn224. Residues 224–229 (NAGKSS), 243–249 (TDIAGTT), and 268–271 (DTAG) each bind GTP. Ser228 contributes to the Mg(2+) binding site. Positions 243, 245, and 248 each coordinate K(+). Thr249 is a binding site for Mg(2+). Lys452 serves as a coordination point for (6S)-5-formyl-5,6,7,8-tetrahydrofolate.

The protein belongs to the TRAFAC class TrmE-Era-EngA-EngB-Septin-like GTPase superfamily. TrmE GTPase family. Homodimer. Heterotetramer of two MnmE and two MnmG subunits. The cofactor is K(+).

It is found in the cytoplasm. Its function is as follows. Exhibits a very high intrinsic GTPase hydrolysis rate. Involved in the addition of a carboxymethylaminomethyl (cmnm) group at the wobble position (U34) of certain tRNAs, forming tRNA-cmnm(5)s(2)U34. This Actinobacillus succinogenes (strain ATCC 55618 / DSM 22257 / CCUG 43843 / 130Z) protein is tRNA modification GTPase MnmE.